A 564-amino-acid chain; its full sequence is Laccase-22 (564 aa).

A signal peptide spans 1–25; the sequence is MAVLPESRRLSLLLMAACFLLQALS. 2 consecutive Plastocyanin-like domains span residues 36-152 and 162-314; these read NVVM…PKLG and KEAV…YANT. 2 N-linked (GlcNAc...) asparagine glycosylation sites follow: N41 and N82. H86 and H88 together coordinate Cu cation. N-linked (GlcNAc...) asparagine glycosylation is present at N118. The Cu cation site is built by H131 and H133. N191, N302, N331, N379, N389, N424, N437, and N447 each carry an N-linked (GlcNAc...) asparagine glycan. Residues 414-548 form the Plastocyanin-like 3 domain; it reads DFPATPLHKF…KMAFVVDNGK (135 aa). Cu cation contacts are provided by H465, H468, H470, H527, C528, H529, and H533.

It belongs to the multicopper oxidase family. The cofactor is Cu cation.

The protein localises to the secreted. It localises to the extracellular space. Its subcellular location is the apoplast. It carries out the reaction 4 hydroquinone + O2 = 4 benzosemiquinone + 2 H2O. Functionally, lignin degradation and detoxification of lignin-derived products. The protein is Laccase-22 (LAC22) of Oryza sativa subsp. japonica (Rice).